Reading from the N-terminus, the 692-residue chain is Small conductance calcium-activated potassium channel-like protein 3 (692 aa).

Residues 270–290 (SLYLALFGVILMLVESEITAE) form a helical membrane-spanning segment. The helical transmembrane segment at 313–333 (TIALLYHIILYHLNDIVLELV) threads the bilayer. Residues 349 to 369 (VIQFCIEFICCGICPLPGSGE) traverse the membrane as a helical segment. Residues 401–421 (VILSCFMLCRSYLFARFMVLH) form a helical membrane-spanning segment. The chain crosses the membrane as a helical span at residues 455-475 (PVLFLTTFTFIFWIIMSWMFV). The pore-forming intramembrane region spans 492–512 (YSNSLWFIAITFMLNGYGDIV). Residues 520 to 540 (FIAIFVGVVGAVISSILIAVI) form a helical membrane-spanning segment. The span at 667-683 (HSTPNVPHLQGLTSSPV) shows a compositional bias: polar residues. The disordered stretch occupies residues 667-692 (HSTPNVPHLQGLTSSPVPSDRYDNRF).

Belongs to the potassium channel KCNN family. SK subfamily. As to quaternary structure, heterooligomer.

Its subcellular location is the membrane. Functionally, forms a voltage-independent potassium channel activated by intracellular calcium. This is Small conductance calcium-activated potassium channel-like protein 3 (kcnl-3) from Caenorhabditis elegans.